A 183-amino-acid polypeptide reads, in one-letter code: ATP synthase subunit delta (183 aa).

Belongs to the ATPase delta chain family. In terms of assembly, F-type ATPases have 2 components, F(1) - the catalytic core - and F(0) - the membrane proton channel. F(1) has five subunits: alpha(3), beta(3), gamma(1), delta(1), epsilon(1). F(0) has three main subunits: a(1), b(2) and c(10-14). The alpha and beta chains form an alternating ring which encloses part of the gamma chain. F(1) is attached to F(0) by a central stalk formed by the gamma and epsilon chains, while a peripheral stalk is formed by the delta and b chains.

Its subcellular location is the cell inner membrane. Its function is as follows. F(1)F(0) ATP synthase produces ATP from ADP in the presence of a proton or sodium gradient. F-type ATPases consist of two structural domains, F(1) containing the extramembraneous catalytic core and F(0) containing the membrane proton channel, linked together by a central stalk and a peripheral stalk. During catalysis, ATP synthesis in the catalytic domain of F(1) is coupled via a rotary mechanism of the central stalk subunits to proton translocation. Functionally, this protein is part of the stalk that links CF(0) to CF(1). It either transmits conformational changes from CF(0) to CF(1) or is implicated in proton conduction. The chain is ATP synthase subunit delta from Ehrlichia canis (strain Jake).